The following is a 164-amino-acid chain: Xanthine-guanine phosphoribosyltransferase (164 aa).

5-phospho-alpha-D-ribose 1-diphosphate contacts are provided by residues 41 to 42 and 98 to 106; these read RG and DDLTDTGKT. Position 99 (aspartate 99) interacts with Mg(2+). 2 residues coordinate guanine: aspartate 102 and isoleucine 145. The xanthine site is built by aspartate 102 and isoleucine 145. GMP is bound by residues 102–106 and 144–145; these read DTGKT and WI.

It belongs to the purine/pyrimidine phosphoribosyltransferase family. XGPT subfamily. In terms of assembly, homotetramer. Mg(2+) serves as cofactor.

The protein resides in the cell inner membrane. The enzyme catalyses GMP + diphosphate = guanine + 5-phospho-alpha-D-ribose 1-diphosphate. It carries out the reaction XMP + diphosphate = xanthine + 5-phospho-alpha-D-ribose 1-diphosphate. The catalysed reaction is IMP + diphosphate = hypoxanthine + 5-phospho-alpha-D-ribose 1-diphosphate. It participates in purine metabolism; GMP biosynthesis via salvage pathway; GMP from guanine: step 1/1. It functions in the pathway purine metabolism; XMP biosynthesis via salvage pathway; XMP from xanthine: step 1/1. Functionally, purine salvage pathway enzyme that catalyzes the transfer of the ribosyl-5-phosphate group from 5-phospho-alpha-D-ribose 1-diphosphate (PRPP) to the N9 position of the 6-oxopurines guanine and xanthine to form the corresponding ribonucleotides GMP (guanosine 5'-monophosphate) and XMP (xanthosine 5'-monophosphate), with the release of PPi. To a lesser extent, also acts on hypoxanthine. The chain is Xanthine-guanine phosphoribosyltransferase from Rhizobium johnstonii (strain DSM 114642 / LMG 32736 / 3841) (Rhizobium leguminosarum bv. viciae).